We begin with the raw amino-acid sequence, 363 residues long: Chorismate synthase (363 aa).

Residue arginine 48 coordinates NADP(+). Residues 125–127 (RSS), 238–239 (NA), glycine 278, 293–297 (KPTAS), and arginine 319 each bind FMN.

This sequence belongs to the chorismate synthase family. As to quaternary structure, homotetramer. It depends on FMNH2 as a cofactor.

It catalyses the reaction 5-O-(1-carboxyvinyl)-3-phosphoshikimate = chorismate + phosphate. It participates in metabolic intermediate biosynthesis; chorismate biosynthesis; chorismate from D-erythrose 4-phosphate and phosphoenolpyruvate: step 7/7. Catalyzes the anti-1,4-elimination of the C-3 phosphate and the C-6 proR hydrogen from 5-enolpyruvylshikimate-3-phosphate (EPSP) to yield chorismate, which is the branch point compound that serves as the starting substrate for the three terminal pathways of aromatic amino acid biosynthesis. This reaction introduces a second double bond into the aromatic ring system. The sequence is that of Chorismate synthase from Acinetobacter baumannii (strain ACICU).